Here is an 86-residue protein sequence, read N- to C-terminus: MQNEAGETVDVYIPRKCSASGRIIGARDYAAVQLNIADVDEKTGRVTGGFKTYAVSGFIRAMGESDDCLHRICTRDGICAGEQPQS.

The protein belongs to the eukaryotic ribosomal protein eS21 family. In terms of assembly, component of the 40S small ribosomal subunit.

The protein resides in the cytoplasm. The protein localises to the cytosol. Its subcellular location is the rough endoplasmic reticulum. The chain is Small ribosomal subunit protein eS21 (RPS21) from Suberites domuncula (Sponge).